The chain runs to 117 residues: Cell cycle protein GpsB (117 aa).

Positions 32 to 70 (LDNVIKDYDAFVKENQRLQDENERLLAKVDELTRQVQVG) form a coiled coil.

This sequence belongs to the GpsB family. As to quaternary structure, forms polymers through the coiled coil domains. Interacts with PBP1, MreC and EzrA.

The protein resides in the cytoplasm. Functionally, divisome component that associates with the complex late in its assembly, after the Z-ring is formed, and is dependent on DivIC and PBP2B for its recruitment to the divisome. Together with EzrA, is a key component of the system that regulates PBP1 localization during cell cycle progression. Its main role could be the removal of PBP1 from the cell pole after pole maturation is completed. Also contributes to the recruitment of PBP1 to the division complex. Not essential for septum formation. The chain is Cell cycle protein GpsB from Levilactobacillus brevis (strain ATCC 367 / BCRC 12310 / CIP 105137 / JCM 1170 / LMG 11437 / NCIMB 947 / NCTC 947) (Lactobacillus brevis).